The following is an 85-amino-acid chain: DNA-directed RNA polymerase subunit Rpo11 (85 aa).

The protein belongs to the archaeal Rpo11/eukaryotic RPB11/RPC19 RNA polymerase subunit family. In terms of assembly, part of the RNA polymerase complex.

It localises to the cytoplasm. The enzyme catalyses RNA(n) + a ribonucleoside 5'-triphosphate = RNA(n+1) + diphosphate. DNA-dependent RNA polymerase (RNAP) catalyzes the transcription of DNA into RNA using the four ribonucleoside triphosphates as substrates. The protein is DNA-directed RNA polymerase subunit Rpo11 of Methanothermobacter thermautotrophicus (strain ATCC 29096 / DSM 1053 / JCM 10044 / NBRC 100330 / Delta H) (Methanobacterium thermoautotrophicum).